Consider the following 115-residue polypeptide: Large ribosomal subunit protein P2 (115 aa).

Methionine 1 is subject to N-acetylmethionine. Phosphoserine is present on residues serine 17 and serine 19. Lysine 21 bears the N6-acetyllysine; alternate mark. The residue at position 21 (lysine 21) is an N6-succinyllysine; alternate. Over residues 78–90 (GSAAPAAGSAPAA) the composition is skewed to low complexity. The disordered stretch occupies residues 78 to 115 (GSAAPAAGSAPAAAEEKKDEKKEESEESDDDMGFGLFD). Serine 79 and serine 86 each carry phosphoserine. Residues 91 to 101 (AEEKKDEKKEE) are compositionally biased toward basic and acidic residues. Phosphoserine occurs at positions 102 and 105.

Belongs to the eukaryotic ribosomal protein P1/P2 family. In terms of assembly, heterodimer with P1 at the lateral ribosomal stalk of the large ribosomal subunit.

Its function is as follows. Plays an important role in the elongation step of protein synthesis. This is Large ribosomal subunit protein P2 (RPLP2) from Homo sapiens (Human).